The primary structure comprises 313 residues: Tyrosine recombinase XerD (313 aa).

Residues 17–102 form the Core-binding (CB) domain; sequence EDNDVIIEQF…TLRRFFQYLY (86 aa). Residues 123–307 enclose the Tyr recombinase domain; it reads RLPKDLSEQQ…ATERLKVLHQ (185 aa). Active-site residues include R163, K187, H259, R262, and H285. Y294 serves as the catalytic O-(3'-phospho-DNA)-tyrosine intermediate.

The protein belongs to the 'phage' integrase family. XerD subfamily. As to quaternary structure, forms a cyclic heterotetrameric complex composed of two molecules of XerC and two molecules of XerD, in which XerC interacts with XerD via its C-terminal region, XerD interacts with XerC via its C-terminal region and so on.

It localises to the cytoplasm. FtsK may regulate the catalytic switch between XerC and XerD in the heterotetrameric complex during the two steps of the recombination process. Site-specific tyrosine recombinase, which acts by catalyzing the cutting and rejoining of the recombining DNA molecules. Binds cooperatively to specific DNA consensus sequences that are separated from XerC binding sites by a short central region, forming the heterotetrameric XerC-XerD complex that recombines DNA substrates. The complex is essential to convert dimers of the bacterial chromosome into monomers to permit their segregation at cell division. It also contributes to the segregational stability of plasmids. In the complex XerD specifically exchanges the bottom DNA strands. This Proteus mirabilis protein is Tyrosine recombinase XerD.